The sequence spans 343 residues: MKTVSIIGGTGYTGSELLRLLSTHEKVEVLNVTSRKEAGKKLTDFHPQVRNLRNYNDLEFQNIAPEDIDTDIVFCATPHGASMAIVPILHEKGINIIDLSGDYRFEDIEMYESWYGLKHTGKIESAVYGLPELHREKIKKSKTIANPGCYPTGAILSMAPLVANDLVDERIIFDSKSGVSGAGVEASQTTHFPNVNENLGAYKITKHRHSPEIGKELEYLGNKKLKVSFTPHLLPVTRGILTTAHSYLKEDVSRADVIEIYEEFYDGEFFVRIFEEGMVSLTGVRGTNFCDIGGFEIDQHGRIVVVSAIDNLVKGASGQAIQNMNIIMGFDEKMGLSVGGMRP.

Cys149 is an active-site residue.

Belongs to the NAGSA dehydrogenase family. Type 1 subfamily.

It is found in the cytoplasm. The catalysed reaction is N-acetyl-L-glutamate 5-semialdehyde + phosphate + NADP(+) = N-acetyl-L-glutamyl 5-phosphate + NADPH + H(+). The protein operates within amino-acid biosynthesis; L-arginine biosynthesis; N(2)-acetyl-L-ornithine from L-glutamate: step 3/4. Catalyzes the NADPH-dependent reduction of N-acetyl-5-glutamyl phosphate to yield N-acetyl-L-glutamate 5-semialdehyde. This is N-acetyl-gamma-glutamyl-phosphate reductase from Methanococcus maripaludis (strain C7 / ATCC BAA-1331).